The sequence spans 191 residues: CASP-like protein 1D1 (191 aa).

Over 1-22 (MTSTSKDTPESGYAVPPPNLFG) the chain is Cytoplasmic. A helical transmembrane segment spans residues 23-43 (VDFGLRLLLLASAVSALVVLV). Topologically, residues 44–73 (TSKQTESIPTSLPPPFPAFISRDAKFQHSP) are extracellular. Residues 74–94 (AFIYLLVALSVTCFYSIITMV) traverse the membrane as a helical segment. Residues 95–118 (ASFAAITSPSSSPRMLFHLVLSDA) are Cytoplasmic-facing. Residues 119 to 139 (VMAGVMASAAGTAGSVAYLGL) traverse the membrane as a helical segment. Over 140–160 (KGNSHVNWNKVCNVYDKFCRH) the chain is Extracellular. The helical transmembrane segment at 161-181 (VGSSAAVSLVASVLLVSLVVL) threads the bilayer. Residues 182 to 191 (SSYSLYRRCR) lie on the Cytoplasmic side of the membrane.

The protein belongs to the Casparian strip membrane proteins (CASP) family. In terms of assembly, homodimer and heterodimers.

It localises to the cell membrane. This is CASP-like protein 1D1 from Musa acuminata (Banana).